The sequence spans 75 residues: DNA-directed RNA polymerase subunit omega (75 aa).

It belongs to the RNA polymerase subunit omega family. In terms of assembly, in cyanobacteria the RNAP catalytic core is composed of 2 alpha, 1 beta, 1 beta', 1 gamma and 1 omega subunit. When a sigma factor is associated with the core the holoenzyme is formed, which can initiate transcription.

The enzyme catalyses RNA(n) + a ribonucleoside 5'-triphosphate = RNA(n+1) + diphosphate. In terms of biological role, promotes RNA polymerase assembly. Latches the N- and C-terminal regions of the beta' subunit thereby facilitating its interaction with the beta and alpha subunits. The protein is DNA-directed RNA polymerase subunit omega of Synechococcus sp. (strain WH7803).